Reading from the N-terminus, the 438-residue chain is Transposon Ty2-OR2 Gag polyprotein (438 aa).

Disordered stretches follow at residues 1–88, 365–397, and 419–438; these read MESQ…YQQH, NVSR…AKAH, and SSQY…TERI. Composition is skewed to polar residues over residues 19–39 and 49–60; these read ASVT…SASN and KVNSQEETTPGT. Residues 295–397 form an RNA-binding region; that stretch reads ENNINVSDRL…SSKPRAAKAH (103 aa). Residues 369–381 are compositionally biased toward low complexity; sequence TSPNTTNTKVTTR.

In terms of assembly, homotrimer.

It localises to the cytoplasm. Functionally, capsid protein (CA) is the structural component of the virus-like particle (VLP), forming the shell that encapsulates the retrotransposons dimeric RNA genome. The particles are assembled from trimer-clustered units and there are holes in the capsid shells that allow for the diffusion of macromolecules. CA also has nucleocapsid-like chaperone activity, promoting primer tRNA(i)-Met annealing to the multipartite primer-binding site (PBS), dimerization of Ty2 RNA and initiation of reverse transcription. The sequence is that of Transposon Ty2-OR2 Gag polyprotein (TY2A-OR2) from Saccharomyces cerevisiae (strain ATCC 204508 / S288c) (Baker's yeast).